The sequence spans 134 residues: Large ribosomal subunit protein bL20 (134 aa).

It belongs to the bacterial ribosomal protein bL20 family.

Binds directly to 23S ribosomal RNA and is necessary for the in vitro assembly process of the 50S ribosomal subunit. It is not involved in the protein synthesizing functions of that subunit. In Rhizobium leguminosarum bv. trifolii (strain WSM2304), this protein is Large ribosomal subunit protein bL20.